The chain runs to 509 residues: Maturase K (509 aa).

Belongs to the intron maturase 2 family. MatK subfamily.

The protein localises to the plastid. The protein resides in the chloroplast. Functionally, usually encoded in the trnK tRNA gene intron. Probably assists in splicing its own and other chloroplast group II introns. The protein is Maturase K of Stylosanthes hamata (Caribbean stylo).